A 340-amino-acid chain; its full sequence is Meiotic recombination protein DMC1/LIM15 homolog (340 aa).

126–133 contributes to the ATP binding site; sequence GEFRTGKT. R230 contacts dsDNA. The ssDNA site is built by R230, F233, R236, R242, and R311. Residues R236 and R242 each coordinate dsDNA.

The protein belongs to the RecA family. DMC1 subfamily. As to quaternary structure, double stacked ring-shaped homooctamer. Interacts with BRCA2. Interacts with the MND1-PSMC3IP heterodimer. Interacts with RAD51AP1; the interaction is direct and stimulates DMC1-mediated homologous recombination. In terms of tissue distribution, testis.

The protein localises to the nucleus. It is found in the chromosome. Its function is as follows. Participates in meiotic recombination, specifically in homologous strand assimilation, which is required for the resolution of meiotic double-strand breaks. In Mus musculus (Mouse), this protein is Meiotic recombination protein DMC1/LIM15 homolog.